The primary structure comprises 672 residues: Fumonisin cluster-specific transcription factor FUM21 (672 aa).

A DNA-binding region (zn(2)-C6 fungal-type) is located at residues 30–56; that stretch reads CESCKRRKVRCNGTNPCNQCQKSSIEC. Disordered stretches follow at residues 65 to 111 and 190 to 212; these read ANDG…RFDG and KSSG…GFNT. Polar residues predominate over residues 77-93; sequence SPVQHTRGSLTPPQTSP.

The protein localises to the nucleus. Functionally, transcription factor that regulates the expression of the gene cluster that mediates the biosynthesis of fumonisins B1 (FB1), B2 (FB2), B3 (FB3), and B4 (FB4), which are carcinogenic mycotoxins. In Gibberella moniliformis (strain M3125 / FGSC 7600) (Maize ear and stalk rot fungus), this protein is Fumonisin cluster-specific transcription factor FUM21 (FUM21).